Reading from the N-terminus, the 140-residue chain is Smith-Magenis syndrome chromosomal region candidate gene 5 protein (140 aa).

Positions 43–77 (CTGPSSQAPPQPPQASPPAAADHSRTPSLLASSHS) are disordered. The segment covering 49-58 (QAPPQPPQAS) has biased composition (pro residues).

In terms of tissue distribution, widely expressed.

The chain is Smith-Magenis syndrome chromosomal region candidate gene 5 protein (SMCR5) from Homo sapiens (Human).